A 461-amino-acid polypeptide reads, in one-letter code: Phosphomethylpyrimidine synthase (461 aa).

Substrate-binding positions include N80, M109, Y138, H173, 193-195 (SRG), 234-237 (DGLR), and E273. H277 lines the Zn(2+) pocket. Y300 is a substrate binding site. Position 341 (H341) interacts with Zn(2+). Residues C421, C424, and C429 each coordinate [4Fe-4S] cluster.

The protein belongs to the ThiC family. Requires [4Fe-4S] cluster as cofactor.

It carries out the reaction 5-amino-1-(5-phospho-beta-D-ribosyl)imidazole + S-adenosyl-L-methionine = 4-amino-2-methyl-5-(phosphooxymethyl)pyrimidine + CO + 5'-deoxyadenosine + formate + L-methionine + 3 H(+). Its pathway is cofactor biosynthesis; thiamine diphosphate biosynthesis. Its function is as follows. Catalyzes the synthesis of the hydroxymethylpyrimidine phosphate (HMP-P) moiety of thiamine from aminoimidazole ribotide (AIR) in a radical S-adenosyl-L-methionine (SAM)-dependent reaction. The sequence is that of Phosphomethylpyrimidine synthase from Solibacter usitatus (strain Ellin6076).